Here is a 250-residue protein sequence, read N- to C-terminus: Glycerol uptake facilitator protein-like 5 (250 aa).

2 consecutive transmembrane segments (helical) span residues 12 to 32 (EFFG…NAFL) and 46 to 66 (GGWL…AMMF). An NPA 1 motif is present at residues 75 to 77 (NPA). A run of 3 helical transmembrane segments spans residues 85–105 (IGIF…LGAI), 142–162 (LNGF…AMGL), and 172–192 (IDIA…SLGG). An NPA 2 motif is present at residues 199-201 (NPA). Residues 230 to 250 (VVAPIVGAVIGIWIYKIFFGL) form a helical membrane-spanning segment.

It belongs to the MIP/aquaporin (TC 1.A.8) family.

It localises to the cell membrane. Its function is as follows. Probable transporter that facilitates the transmembrane diffusion of an unknown substrate. Is not permeable to water, dihydroxyacetone, glycerol, urea, H(2)O(2) and D/L-lactic acid. The sequence is that of Glycerol uptake facilitator protein-like 5 from Lactiplantibacillus plantarum (strain ATCC BAA-793 / NCIMB 8826 / WCFS1) (Lactobacillus plantarum).